We begin with the raw amino-acid sequence, 482 residues long: Class E basic helix-loop-helix protein 41 (482 aa).

Residue K31 forms a Glycyl lysine isopeptide (Lys-Gly) (interchain with G-Cter in SUMO2) linkage. The 56-residue stretch at 44–99 (TYKLPHRLIEKKRRDRINECIAQLKDLLPEHLKLTTLGHLEKAVVLELTLKHLKAL) folds into the bHLH domain. Residues 67 to 71 (LKDLL) form a necessary for interaction with RXRA and repressor activity towards RXRA region. A Glycyl lysine isopeptide (Lys-Gly) (interchain with G-Cter in SUMO2) cross-link involves residue K121. Residues 131 to 166 (FHSGFQTCAKEVLQYLSRFESWTPREPRCVQLINHL) enclose the Orange domain. A Glycyl lysine isopeptide (Lys-Gly) (interchain with G-Cter in SUMO2) cross-link involves residue K210. 2 disordered regions span residues 228-298 (AELA…GGAA) and 438-482 (VAPL…KEAP). Over residues 246–256 (AEARPDREKGK) the composition is skewed to basic and acidic residues. K266 participates in a covalent cross-link: Glycyl lysine isopeptide (Lys-Gly) (interchain with G-Cter in SUMO2). The segment covering 285 to 297 (RGGGSGGGPGGGA) has biased composition (gly residues).

Homodimer. Heterodimer with BHLHE40/DEC1. Interacts with CIART and BMAL1. Interacts with RXRA. Interacts with NR0B2 and HNF1A. As to expression, highly expressed in skeletal muscle and brain, moderately expressed in pancreas and heart, weakly expressed in placenta, lung, liver and kidney.

It localises to the nucleus. Transcriptional repressor involved in the regulation of the circadian rhythm by negatively regulating the activity of the clock genes and clock-controlled genes. Acts as the negative limb of a novel autoregulatory feedback loop (DEC loop) which differs from the one formed by the PER and CRY transcriptional repressors (PER/CRY loop). Both these loops are interlocked as it represses the expression of PER1 and in turn is repressed by PER1/2 and CRY1/2. Represses the activity of the circadian transcriptional activator: CLOCK-BMAL1 heterodimer by competing for the binding to E-box elements (5'-CACGTG-3') found within the promoters of its target genes. Negatively regulates its own expression and the expression of DBP and BHLHE41/DEC2. Acts as a corepressor of RXR and the RXR-LXR heterodimers and represses the ligand-induced RXRA/B/G, NR1H3/LXRA, NR1H4 and VDR transactivation activity. Inhibits HNF1A-mediated transactivation of CYP1A2, CYP2E1 AND CYP3A11. The chain is Class E basic helix-loop-helix protein 41 from Homo sapiens (Human).